The chain runs to 406 residues: Tryptophan synthase beta chain (406 aa).

K99 bears the N6-(pyridoxal phosphate)lysine mark.

This sequence belongs to the TrpB family. In terms of assembly, tetramer of two alpha and two beta chains. The cofactor is pyridoxal 5'-phosphate.

It carries out the reaction (1S,2R)-1-C-(indol-3-yl)glycerol 3-phosphate + L-serine = D-glyceraldehyde 3-phosphate + L-tryptophan + H2O. It functions in the pathway amino-acid biosynthesis; L-tryptophan biosynthesis; L-tryptophan from chorismate: step 5/5. Functionally, the beta subunit is responsible for the synthesis of L-tryptophan from indole and L-serine. The polypeptide is Tryptophan synthase beta chain (Rhizobium etli (strain CIAT 652)).